We begin with the raw amino-acid sequence, 201 residues long: MELVLKDAQSALEVSETTFGRDFNEALVHQVVVAYAANARQGTRAQKTRAEVTGSGKKPWRQKGTGRARAGSVKGPIWRGGGVTFAAKTQDHSQKVNKKMYRGALKSILSELVRQERLVVVESFGVEAPKTKELKAKLKAMNLEDVLIVTAEVDENLFLAARNLYKVDVRDVAGLDPVSLIAFNTVLVTADAVKQIEEMLA.

Positions 45 to 72 (AQKTRAEVTGSGKKPWRQKGTGRARAGS) are disordered.

This sequence belongs to the universal ribosomal protein uL4 family. In terms of assembly, part of the 50S ribosomal subunit.

One of the primary rRNA binding proteins, this protein initially binds near the 5'-end of the 23S rRNA. It is important during the early stages of 50S assembly. It makes multiple contacts with different domains of the 23S rRNA in the assembled 50S subunit and ribosome. Its function is as follows. Forms part of the polypeptide exit tunnel. The protein is Large ribosomal subunit protein uL4 of Shewanella baltica (strain OS223).